The sequence spans 321 residues: Mechanosensory protein 3 (321 aa).

LIM zinc-binding domains lie at 27-86 (NKCN…DHSI) and 87-152 (HRCA…QMDD). The segment at residues 217–276 (RRGPRTTIKQNQLDVLNEMFSNTPKPSKHARAKLALETGLSMRVIQVWFQNRRSKERRLK) is a DNA-binding region (homeobox).

In terms of assembly, interacts with unc-86; the heterooligomer binds to the promoters of mec-3, mec-4 and mec-7. In terms of tissue distribution, expressed in the mechanosensory neurons ALML, ALMR, PLML, PLMR, AVM and PVM, and the FLPL and FLPR neurons.

It is found in the nucleus. Functionally, transcription factor. Specifies differentiation of the set of six touch receptor neurons (TRNs). May positively modulate expression of both its own gene and also of homeobox ARX homolog alr-1 in TRNs, forming a positive feedback loop with alr-1, thereby restricting the variability of expression of mec-3. Required to determine the identity of ALM sensory neurons, acting by interacting with unc-86, thereby preventing unc-86 cooperating with pag-3 to induce BDU-neuron specific genes. Binds cooperatively as a heterodimer with unc-86 to sites in the mec-3 gene promoter. Promotes outgrowth of lateral dendritic branches on the PVD nociceptive neurons, probably acting both directly, and upstream of zinc finger protein egl-46. The sequence is that of Mechanosensory protein 3 (mec-3) from Caenorhabditis elegans.